The chain runs to 295 residues: uncharacterized protein (295 aa).

Disordered regions lie at residues 33–52 (VDAP…DSHS) and 180–295 (LSKA…AELK). Position 50 is a phosphoserine (Ser50). Composition is skewed to polar residues over residues 205–217 (QKNS…SKLI) and 241–251 (TSRASVLSQSP). Acidic residues predominate over residues 267 to 276 (EASEGPEDTP). Low complexity predominate over residues 277–289 (ESSQSPEESVSAS).

This is an uncharacterized protein from Homo sapiens (Human).